Reading from the N-terminus, the 672-residue chain is Rho GTPase-activating protein 40 (672 aa).

Residues 43 to 68 (GCSPGLSTGPTNLQQHPQKPRPADCS) form a disordered region. Positions 47–59 (GLSTGPTNLQQHP) are enriched in polar residues. Residues 321–519 (VPLHSLLEAD…MMVQYQDLLW (199 aa)) enclose the Rho-GAP domain.

GTPase activator for the Rho-type GTPases by converting them to an inactive GDP-bound state. In Mus musculus (Mouse), this protein is Rho GTPase-activating protein 40.